A 270-amino-acid chain; its full sequence is Hydroxyethylthiazole kinase (270 aa).

Methionine 47 lines the substrate pocket. The ATP site is built by arginine 123 and serine 170. Substrate is bound at residue glycine 197.

Belongs to the Thz kinase family. Mg(2+) serves as cofactor.

It carries out the reaction 5-(2-hydroxyethyl)-4-methylthiazole + ATP = 4-methyl-5-(2-phosphooxyethyl)-thiazole + ADP + H(+). It functions in the pathway cofactor biosynthesis; thiamine diphosphate biosynthesis; 4-methyl-5-(2-phosphoethyl)-thiazole from 5-(2-hydroxyethyl)-4-methylthiazole: step 1/1. Functionally, catalyzes the phosphorylation of the hydroxyl group of 4-methyl-5-beta-hydroxyethylthiazole (THZ). The protein is Hydroxyethylthiazole kinase of Syntrophus aciditrophicus (strain SB).